Consider the following 79-residue polypeptide: Endothelin-2 (79 aa).

Positions 1-23 (PEQTAPYGLGNPPRRRRRSLPRR) are disordered. Positions 24-39 (CQCSSARDPSCATFCL) are endothelin-like. The tract at residues 51–79 (SRKSPADVFQTGKTGATRGELLQRLRDIS) is disordered.

It belongs to the endothelin/sarafotoxin family.

The protein localises to the secreted. Endothelins are endothelium-derived vasoconstrictor peptides. This Macaca fascicularis (Crab-eating macaque) protein is Endothelin-2 (EDN2).